A 549-amino-acid chain; its full sequence is Oxygen-dependent choline dehydrogenase (549 aa).

An FAD-binding site is contributed by aspartate 4–glutamate 33. Histidine 465 (proton acceptor) is an active-site residue. The disordered stretch occupies residues proline 530–arginine 549.

The protein belongs to the GMC oxidoreductase family. It depends on FAD as a cofactor.

It catalyses the reaction choline + A = betaine aldehyde + AH2. The enzyme catalyses betaine aldehyde + NAD(+) + H2O = glycine betaine + NADH + 2 H(+). The protein operates within amine and polyamine biosynthesis; betaine biosynthesis via choline pathway; betaine aldehyde from choline (cytochrome c reductase route): step 1/1. Its function is as follows. Involved in the biosynthesis of the osmoprotectant glycine betaine. Catalyzes the oxidation of choline to betaine aldehyde and betaine aldehyde to glycine betaine at the same rate. The chain is Oxygen-dependent choline dehydrogenase from Rhizobium etli (strain ATCC 51251 / DSM 11541 / JCM 21823 / NBRC 15573 / CFN 42).